The sequence spans 735 residues: Rho GTPase-activating protein SYDE1 (735 aa).

The tract at residues 1–253 (MAEPLLRKTF…SPTSFRPYEV (253 aa)) is disordered. The span at 14–31 (RGREKLPRKKSDAKERGH) shows a compositional bias: basic and acidic residues. Residues 35-46 (RPEPSPPEPEPQ) show a composition bias toward pro residues. Over residues 47–71 (APEGSQAGAEGPSSPEASRSPARGA) the composition is skewed to low complexity. Pro residues predominate over residues 122–131 (PPAPEPPGPQ). Over residues 211–221 (GGPGPAAGPGG) the composition is skewed to gly residues. Phosphoserine is present on residues Ser-224, Ser-231, Ser-235, and Ser-244. Residues 249–366 (RPYEVGPAAR…FRGCQAQQLA (118 aa)) enclose the C2 domain. A Rho-GAP domain is found at 398-604 (LPLPLLVERE…YLLQSWPDPR (207 aa)). A Phosphoserine modification is found at Ser-575. Disordered regions lie at residues 608 to 651 (QSPD…SNRY) and 674 to 696 (DYDHVTGSDSEDEDEEVGEPRVT). A phosphoserine mark is found at Ser-681 and Ser-683.

Post-translationally, palmitoylated. Probably palmitoylated by ZDHHC3 and ZDHHC7. As to expression, expressed in trophoblast cells of placental villi.

Its function is as follows. GTPase activator for the Rho-type GTPases. As a GCM1 downstream effector, it is involved in placental development and positively regulates trophoblast cells migration. It regulates cytoskeletal remodeling by controlling the activity of Rho GTPases including RHOA, CDC42 and RAC1. This Homo sapiens (Human) protein is Rho GTPase-activating protein SYDE1 (SYDE1).